A 352-amino-acid polypeptide reads, in one-letter code: MTINLIKYGLTTAVQADLTKENGQILGRIIGQHRDWYQVITTAGERSAQVTGKLAYEAASPAAFPAVGDWVCLSSSADNQAQIEAIAPRQSVLARGAVNRQDGQIIATNINTIFICMSLNADFNVRRLERYLTIAWDSGALPVIVLTKADLCTDLATKLRAVADVSVGVPTITCSVETGQGLDELQPYLTTGQTVAFVGSSGVGKSTLINRLLGQDILATKSIRTDDNKGRHTTTSRQLIPLPTGACVIDTPGMRELQIFMGDLNQTFAEIAALATQCKFNDCTHTSEPGCAVRAAVEVGTVTSERLQSYQKLQREMSYQGLNSRQLEQAKIQRMFGGKQAMKRVKQRYHRD.

In terms of domain architecture, CP-type G spans 100–257; that stretch reads RQDGQIIATN…VIDTPGMREL (158 aa). GTP is bound by residues 147–150 and 199–207; these read TKAD and GSSGVGKST. 4 residues coordinate Zn(2+): Cys278, Cys283, His285, and Cys291.

It belongs to the TRAFAC class YlqF/YawG GTPase family. RsgA subfamily. In terms of assembly, monomer. Associates with 30S ribosomal subunit, binds 16S rRNA. Zn(2+) serves as cofactor.

The protein resides in the cytoplasm. Functionally, one of several proteins that assist in the late maturation steps of the functional core of the 30S ribosomal subunit. Helps release RbfA from mature subunits. May play a role in the assembly of ribosomal proteins into the subunit. Circularly permuted GTPase that catalyzes slow GTP hydrolysis, GTPase activity is stimulated by the 30S ribosomal subunit. This chain is Small ribosomal subunit biogenesis GTPase RsgA 2, found in Lactiplantibacillus plantarum (strain ATCC BAA-793 / NCIMB 8826 / WCFS1) (Lactobacillus plantarum).